The following is a 457-amino-acid chain: Argininosuccinate lyase (457 aa).

Belongs to the lyase 1 family. Argininosuccinate lyase subfamily.

The protein localises to the cytoplasm. It catalyses the reaction 2-(N(omega)-L-arginino)succinate = fumarate + L-arginine. Its pathway is amino-acid biosynthesis; L-arginine biosynthesis; L-arginine from L-ornithine and carbamoyl phosphate: step 3/3. This is Argininosuccinate lyase from Pectobacterium carotovorum subsp. carotovorum (strain PC1).